Consider the following 141-residue polypeptide: Hemoglobin subunit alpha-2 (141 aa).

One can recognise a Globin domain in the interval 1–141 (VLSPADKNNV…VSTVLTSKYR (141 aa)). An O2-binding site is contributed by His58. His87 is a heme b binding site.

This sequence belongs to the globin family. Heterotetramer of two alpha chains and two beta chains. Red blood cells.

Involved in oxygen transport from the lung to the various peripheral tissues. This Varecia variegata (Black-and-white ruffed lemur) protein is Hemoglobin subunit alpha-2.